We begin with the raw amino-acid sequence, 140 residues long: Small ribosomal subunit protein eS17x (140 aa).

The protein belongs to the eukaryotic ribosomal protein eS17 family.

The chain is Small ribosomal subunit protein eS17x (RPS17C) from Arabidopsis thaliana (Mouse-ear cress).